The primary structure comprises 280 residues: Putative pyruvate, phosphate dikinase regulatory protein (280 aa).

152 to 159 (GVSRTSKS) is an ADP binding site.

The protein belongs to the pyruvate, phosphate/water dikinase regulatory protein family. PDRP subfamily.

It catalyses the reaction N(tele)-phospho-L-histidyl/L-threonyl-[pyruvate, phosphate dikinase] + ADP = N(tele)-phospho-L-histidyl/O-phospho-L-threonyl-[pyruvate, phosphate dikinase] + AMP + H(+). The catalysed reaction is N(tele)-phospho-L-histidyl/O-phospho-L-threonyl-[pyruvate, phosphate dikinase] + phosphate + H(+) = N(tele)-phospho-L-histidyl/L-threonyl-[pyruvate, phosphate dikinase] + diphosphate. Bifunctional serine/threonine kinase and phosphorylase involved in the regulation of the pyruvate, phosphate dikinase (PPDK) by catalyzing its phosphorylation/dephosphorylation. The polypeptide is Putative pyruvate, phosphate dikinase regulatory protein (Anaplasma phagocytophilum (strain HZ)).